The primary structure comprises 196 residues: Peptidyl-tRNA hydrolase (196 aa).

A tRNA-binding site is contributed by Tyr21. His26 functions as the Proton acceptor in the catalytic mechanism. TRNA-binding residues include Phe72, Asn74, and Asn120.

This sequence belongs to the PTH family. As to quaternary structure, monomer.

The protein localises to the cytoplasm. It carries out the reaction an N-acyl-L-alpha-aminoacyl-tRNA + H2O = an N-acyl-L-amino acid + a tRNA + H(+). In terms of biological role, hydrolyzes ribosome-free peptidyl-tRNAs (with 1 or more amino acids incorporated), which drop off the ribosome during protein synthesis, or as a result of ribosome stalling. Functionally, catalyzes the release of premature peptidyl moieties from peptidyl-tRNA molecules trapped in stalled 50S ribosomal subunits, and thus maintains levels of free tRNAs and 50S ribosomes. This Mycobacteroides abscessus (strain ATCC 19977 / DSM 44196 / CCUG 20993 / CIP 104536 / JCM 13569 / NCTC 13031 / TMC 1543 / L948) (Mycobacterium abscessus) protein is Peptidyl-tRNA hydrolase.